The sequence spans 407 residues: Histidine--tRNA ligase (407 aa).

The protein belongs to the class-II aminoacyl-tRNA synthetase family. In terms of assembly, homodimer.

It is found in the cytoplasm. It catalyses the reaction tRNA(His) + L-histidine + ATP = L-histidyl-tRNA(His) + AMP + diphosphate + H(+). This chain is Histidine--tRNA ligase, found in Wolbachia pipientis subsp. Culex pipiens (strain wPip).